Reading from the N-terminus, the 155-residue chain is Interleukin-36 receptor antagonist protein (155 aa).

Cys8 and Cys154 are joined by a disulfide.

It belongs to the IL-1 family. As to quaternary structure, interacts with cargo receptor TMED10; the interaction mediates the translocation from the cytoplasm into the ERGIC (endoplasmic reticulum-Golgi intermediate compartment) and thereby secretion. In terms of tissue distribution, predominantly expressed in skin keratinocytes but not in fibroblasts, endothelial cells or melanocytes. Detected also in the spleen, brain leukocyte and macrophage cell types. Increased in lesional psoriasis skin.

Its subcellular location is the cytoplasm. The protein resides in the secreted. In terms of biological role, inhibits the activity of interleukin-36 (IL36A,IL36B and IL36G) by binding to receptor IL1RL2 and preventing its association with the coreceptor IL1RAP for signaling. Part of the IL-36 signaling system that is thought to be present in epithelial barriers and to take part in local inflammatory response; similar to the IL-1 system with which it shares the coreceptor. Proposed to play a role in skin inflammation. May be involved in the innate immune response to fungal pathogens, such as Aspergillus fumigatus. May activate an anti-inflammatory signaling pathway by recruiting SIGIRR. The sequence is that of Interleukin-36 receptor antagonist protein from Homo sapiens (Human).